A 235-amino-acid chain; its full sequence is Lipoprotein-releasing system ATP-binding protein LolD 1 (235 aa).

Residues Phe5 to Leu234 enclose the ABC transporter domain. Gly42–Thr49 serves as a coordination point for ATP.

Belongs to the ABC transporter superfamily. Lipoprotein translocase (TC 3.A.1.125) family. In terms of assembly, the complex is composed of two ATP-binding proteins (LolD) and two transmembrane proteins (LolC and LolE).

Its subcellular location is the cell inner membrane. Part of the ABC transporter complex LolCDE involved in the translocation of mature outer membrane-directed lipoproteins, from the inner membrane to the periplasmic chaperone, LolA. Responsible for the formation of the LolA-lipoprotein complex in an ATP-dependent manner. The sequence is that of Lipoprotein-releasing system ATP-binding protein LolD 1 from Chlorobium luteolum (strain DSM 273 / BCRC 81028 / 2530) (Pelodictyon luteolum).